The following is a 449-amino-acid chain: MHDRTFHIETFGCQMNVNDSDWLARALMERGFSPAPFGEARLTIVNTCSVRDKPEQKVYSLLGRIRQATSKKPDAFVAVGGCVAQQIGSGFFSRFPQVRLVFGTDGLAMAPQALDRLVEEPDLKLSLLDFSEDYPERDAVLGQGAVPASVFVNIMQGCDNFCAYCIVPYTRGRQKSRATGTILDECRALLDRGAREITLLGQNVNSFGQDSHGDGTTFAQLLHKVAALPGLERLRFVTPHPKDIAPEVVEAFGTLPNLCPRLHLPLQAGSDRILKLMGRRYDMARYLRIVDDLRAARPDIVLSSDIIVGFPGETEEDFMETMDALETVGYAASYSFCYSDRPGTRAEMLPDKLSREVKLERLERLQTLQNRLTERCLQDMVGRKVEVLLEGMSRKPGDEGDSWQGRDPYGNLVNVALPQGSDVRGRFLPVVVAQAKKHSLLAEQAGAPW.

In terms of domain architecture, MTTase N-terminal spans 4–119 (RTFHIETFGC…APQALDRLVE (116 aa)). Residues Cys-13, Cys-48, Cys-82, Cys-158, Cys-162, and Cys-165 each coordinate [4Fe-4S] cluster. Residues 144–375 (GAVPASVFVN…QTLQNRLTER (232 aa)) enclose the Radical SAM core domain. Positions 378–446 (QDMVGRKVEV…KHSLLAEQAG (69 aa)) constitute a TRAM domain.

It belongs to the methylthiotransferase family. MiaB subfamily. In terms of assembly, monomer. It depends on [4Fe-4S] cluster as a cofactor.

Its subcellular location is the cytoplasm. It carries out the reaction N(6)-dimethylallyladenosine(37) in tRNA + (sulfur carrier)-SH + AH2 + 2 S-adenosyl-L-methionine = 2-methylsulfanyl-N(6)-dimethylallyladenosine(37) in tRNA + (sulfur carrier)-H + 5'-deoxyadenosine + L-methionine + A + S-adenosyl-L-homocysteine + 2 H(+). Catalyzes the methylthiolation of N6-(dimethylallyl)adenosine (i(6)A), leading to the formation of 2-methylthio-N6-(dimethylallyl)adenosine (ms(2)i(6)A) at position 37 in tRNAs that read codons beginning with uridine. This chain is tRNA-2-methylthio-N(6)-dimethylallyladenosine synthase, found in Nitratidesulfovibrio vulgaris (strain ATCC 29579 / DSM 644 / CCUG 34227 / NCIMB 8303 / VKM B-1760 / Hildenborough) (Desulfovibrio vulgaris).